A 119-amino-acid chain; its full sequence is Ribosome-binding factor A (119 aa).

Belongs to the RbfA family. In terms of assembly, monomer. Binds 30S ribosomal subunits, but not 50S ribosomal subunits or 70S ribosomes.

It localises to the cytoplasm. One of several proteins that assist in the late maturation steps of the functional core of the 30S ribosomal subunit. Associates with free 30S ribosomal subunits (but not with 30S subunits that are part of 70S ribosomes or polysomes). Required for efficient processing of 16S rRNA. May interact with the 5'-terminal helix region of 16S rRNA. This Chlorobium phaeovibrioides (strain DSM 265 / 1930) (Prosthecochloris vibrioformis (strain DSM 265)) protein is Ribosome-binding factor A.